A 454-amino-acid chain; its full sequence is Bifunctional protein GlmU (454 aa).

Positions 1–228 are pyrophosphorylase; it reads MTLPLHVVIL…PQDVEGANDP (228 aa). UDP-N-acetyl-alpha-D-glucosamine contacts are provided by residues 10–13, K24, Q76, 81–82, 103–105, G138, E153, N168, and N226; these read LAAG, GT, and YGD. D105 contributes to the Mg(2+) binding site. Residue N226 coordinates Mg(2+). The tract at residues 229–249 is linker; it reads WQLAQLERAWQLRAARALSLQ. The interval 250 to 454 is N-acetyltransferase; sequence GVRMADPARV…IEGWERPTKK (205 aa). Positions 332 and 350 each coordinate UDP-N-acetyl-alpha-D-glucosamine. The active-site Proton acceptor is the H362. Residues Y365 and N376 each coordinate UDP-N-acetyl-alpha-D-glucosamine. Residues A379, 385–386, S404, A422, and R439 contribute to the acetyl-CoA site; that span reads NY.

In the N-terminal section; belongs to the N-acetylglucosamine-1-phosphate uridyltransferase family. It in the C-terminal section; belongs to the transferase hexapeptide repeat family. As to quaternary structure, homotrimer. Requires Mg(2+) as cofactor.

It is found in the cytoplasm. The enzyme catalyses alpha-D-glucosamine 1-phosphate + acetyl-CoA = N-acetyl-alpha-D-glucosamine 1-phosphate + CoA + H(+). The catalysed reaction is N-acetyl-alpha-D-glucosamine 1-phosphate + UTP + H(+) = UDP-N-acetyl-alpha-D-glucosamine + diphosphate. It functions in the pathway nucleotide-sugar biosynthesis; UDP-N-acetyl-alpha-D-glucosamine biosynthesis; N-acetyl-alpha-D-glucosamine 1-phosphate from alpha-D-glucosamine 6-phosphate (route II): step 2/2. Its pathway is nucleotide-sugar biosynthesis; UDP-N-acetyl-alpha-D-glucosamine biosynthesis; UDP-N-acetyl-alpha-D-glucosamine from N-acetyl-alpha-D-glucosamine 1-phosphate: step 1/1. It participates in bacterial outer membrane biogenesis; LPS lipid A biosynthesis. Catalyzes the last two sequential reactions in the de novo biosynthetic pathway for UDP-N-acetylglucosamine (UDP-GlcNAc). The C-terminal domain catalyzes the transfer of acetyl group from acetyl coenzyme A to glucosamine-1-phosphate (GlcN-1-P) to produce N-acetylglucosamine-1-phosphate (GlcNAc-1-P), which is converted into UDP-GlcNAc by the transfer of uridine 5-monophosphate (from uridine 5-triphosphate), a reaction catalyzed by the N-terminal domain. The sequence is that of Bifunctional protein GlmU from Xanthomonas oryzae pv. oryzae (strain MAFF 311018).